Reading from the N-terminus, the 493-residue chain is Xaa-Pro dipeptidase (493 aa).

A2 bears the N-acetylalanine mark. A Phosphoserine modification is found at S167. Residue H255 coordinates a dipeptide. The Mn(2+) site is built by D276, D287, and H370. D287 serves as a coordination point for a dipeptide. The a dipeptide site is built by H377 and R398. Mn(2+) contacts are provided by E412 and E452.

This sequence belongs to the peptidase M24B family. Eukaryotic-type prolidase subfamily. As to quaternary structure, homodimer. The cofactor is Mn(2+).

It catalyses the reaction Xaa-L-Pro dipeptide + H2O = an L-alpha-amino acid + L-proline. Functionally, dipeptidase that catalyzes the hydrolysis of dipeptides with a prolyl (Xaa-Pro) or hydroxyprolyl residue in the C-terminal position. The preferred dipeptide substrate is Gly-Pro, but other Xaa-Pro dipeptides, such as Ala-Pro, Met-Pro, Phe-Pro, Val-Pro and Leu-Pro, can be cleaved. Plays an important role in collagen metabolism because the high level of iminoacids in collagen. The sequence is that of Xaa-Pro dipeptidase (Pepd) from Mus musculus (Mouse).